The sequence spans 254 residues: Triosephosphate isomerase (254 aa).

Residue 12-14 (NWK) coordinates substrate. His99 acts as the Electrophile in catalysis. The active-site Proton acceptor is Glu169. Substrate is bound by residues Gly175, Ser214, and 235 to 236 (GG).

This sequence belongs to the triosephosphate isomerase family. As to quaternary structure, homodimer.

It is found in the cytoplasm. The enzyme catalyses D-glyceraldehyde 3-phosphate = dihydroxyacetone phosphate. It participates in carbohydrate biosynthesis; gluconeogenesis. Its pathway is carbohydrate degradation; glycolysis; D-glyceraldehyde 3-phosphate from glycerone phosphate: step 1/1. Functionally, involved in the gluconeogenesis. Catalyzes stereospecifically the conversion of dihydroxyacetone phosphate (DHAP) to D-glyceraldehyde-3-phosphate (G3P). This is Triosephosphate isomerase from Bartonella bacilliformis (strain ATCC 35685 / KC583 / Herrer 020/F12,63).